Reading from the N-terminus, the 378-residue chain is Monomethylxanthine methyltransferase 1 (378 aa).

Residues Tyr18, Cys61, Asn66, Asp100, Leu101, Ser139, Phe140, and Cys156 each contribute to the S-adenosyl-L-homocysteine site. Theobromine contacts are provided by Tyr157, His160, and Trp161. Residues Asn178, Asp260, Phe262, and Asn263 each contribute to the Mg(2+) site. Tyr362 contacts theobromine.

Belongs to the methyltransferase superfamily. Type-7 methyltransferase family. Mg(2+) is required as a cofactor. Expressed, at low levels, in stems, young leaves, floral buds and immature fruits (grains), but not in roots, old leaves and mature fruits.

It localises to the cytoplasm. The catalysed reaction is 7-methylxanthine + S-adenosyl-L-methionine = theobromine + S-adenosyl-L-homocysteine + H(+). It functions in the pathway alkaloid biosynthesis. Its function is as follows. Involved in the biosynthesis of caffeine. Catalyzes the conversion of 7-methylxanthine (7mX) to theobromine and of paraxanthine to caffeine. Has a 5-fold preference for 7mX. This chain is Monomethylxanthine methyltransferase 1, found in Coffea arabica (Arabian coffee).